Here is an 81-residue protein sequence, read N- to C-terminus: Dermaseptin-S6 (81 aa).

The N-terminal stretch at 1–22 is a signal peptide; sequence MDILKKSLFFILFLGLVSLSIS. Residues 22 to 49 form a disordered region; the sequence is SEEEKRENEDEEDQEDDEQSEEKRGLWS. Residues 23–45 constitute a propeptide that is removed on maturation; the sequence is EEEKRENEDEEDQEDDEQSEEKR. Acidic residues predominate over residues 30–41; sequence EDEEDQEDDEQS. Position 78 is an isoleucine amide (isoleucine 78). Positions 80–81 are excised as a propeptide; it reads EQ.

This sequence belongs to the frog skin active peptide (FSAP) family. Dermaseptin subfamily. Expressed by the skin glands.

Its subcellular location is the secreted. Its function is as follows. Antimicrobial peptide. The chain is Dermaseptin-S6 from Phyllomedusa sauvagei (Sauvage's leaf frog).